We begin with the raw amino-acid sequence, 218 residues long: Monomethylamine corrinoid protein 2 (218 aa).

The 91-residue stretch at 1-91 (MTNTEIFNKL…ELEKTKVEGE (91 aa)) folds into the B12-binding N-terminal domain. In terms of domain architecture, B12-binding spans 94–218 (TGLAITFVAE…AAKVALNVMK (125 aa)). His107 provides a ligand contact to methylcob(III)alamin.

This sequence belongs to the methylamine corrinoid protein family. As to quaternary structure, can form a complex with MtmB.

Its pathway is one-carbon metabolism; methanogenesis from methylamine. Functionally, acts as a methyl group carrier between MtmB and MtbA. This is Monomethylamine corrinoid protein 2 (mtmC2) from Methanosarcina mazei (strain ATCC BAA-159 / DSM 3647 / Goe1 / Go1 / JCM 11833 / OCM 88) (Methanosarcina frisia).